A 207-amino-acid polypeptide reads, in one-letter code: Small ribosomal subunit protein uS4 (207 aa).

The interval Lys31–Gln55 is disordered. The span at Gly42 to Gly53 shows a compositional bias: polar residues. Residues Ser97–Leu160 enclose the S4 RNA-binding domain.

This sequence belongs to the universal ribosomal protein uS4 family. As to quaternary structure, part of the 30S ribosomal subunit. Contacts protein S5. The interaction surface between S4 and S5 is involved in control of translational fidelity.

Functionally, one of the primary rRNA binding proteins, it binds directly to 16S rRNA where it nucleates assembly of the body of the 30S subunit. In terms of biological role, with S5 and S12 plays an important role in translational accuracy. This chain is Small ribosomal subunit protein uS4, found in Burkholderia ambifaria (strain ATCC BAA-244 / DSM 16087 / CCUG 44356 / LMG 19182 / AMMD) (Burkholderia cepacia (strain AMMD)).